A 2077-amino-acid polypeptide reads, in one-letter code: Large tegument protein deneddylase (2077 aa).

The segment at 1–231 is deubiquitination activity; the sequence is MKIITSSTNQ…PDIAIALDKF (231 aa). The 219-residue stretch at 3 to 221 folds into the Peptidase C76 domain; it reads IITSSTNQND…ELLILKTYKD (219 aa). Residues C23, D156, and H158 contribute to the active site. A region of interest (interaction with inner tegument protein) is located at residue S287. A disordered region spans residues 1982–2004; sequence PPNNTESTRPGKQTSETLTNKNL.

Belongs to the herpesviridae large tegument protein family. In terms of assembly, interacts with host CUL1 and CUL4A; these interactions inhibit the E3 ligase activity of cullins. Interacts with inner tegument protein. Interacts with capsid vertex specific component CVC2. Interacts with the major capsid protein/MCP.

It is found in the virion tegument. Its subcellular location is the host cytoplasm. The protein localises to the host nucleus. It carries out the reaction Thiol-dependent hydrolysis of ester, thioester, amide, peptide and isopeptide bonds formed by the C-terminal Gly of ubiquitin (a 76-residue protein attached to proteins as an intracellular targeting signal).. Large tegument protein that plays multiple roles in the viral cycle. During viral entry, remains associated with the capsid while most of the tegument is detached and participates in the capsid transport toward the host nucleus. Plays a role in the routing of the capsid at the nuclear pore complex and subsequent uncoating. Within the host nucleus, acts as a deneddylase and promotes the degradation of nuclear CRLs (cullin-RING ubiquitin ligases) and thereby stabilizes nuclear CRL substrates, while cytoplasmic CRLs remain unaffected. These modifications prevent host cell cycle S-phase progression and create a favorable environment allowing efficient viral genome replication. Participates later in the secondary envelopment of capsids. Indeed, plays a linker role for the association of the outer viral tegument to the capsids together with the inner tegument protein. The polypeptide is Large tegument protein deneddylase (U31) (Homo sapiens (Human)).